Consider the following 88-residue polypeptide: Small ribosomal subunit protein uS17 (88 aa).

It belongs to the universal ribosomal protein uS17 family. As to quaternary structure, part of the 30S ribosomal subunit.

Functionally, one of the primary rRNA binding proteins, it binds specifically to the 5'-end of 16S ribosomal RNA. The protein is Small ribosomal subunit protein uS17 of Lactobacillus delbrueckii subsp. bulgaricus (strain ATCC 11842 / DSM 20081 / BCRC 10696 / JCM 1002 / NBRC 13953 / NCIMB 11778 / NCTC 12712 / WDCM 00102 / Lb 14).